A 291-amino-acid polypeptide reads, in one-letter code: 4-hydroxy-tetrahydrodipicolinate synthase (291 aa).

T45 provides a ligand contact to pyruvate. The Proton donor/acceptor role is filled by Y133. Catalysis depends on K161, which acts as the Schiff-base intermediate with substrate. Residue I203 coordinates pyruvate.

This sequence belongs to the DapA family. Homotetramer; dimer of dimers.

It localises to the cytoplasm. It carries out the reaction L-aspartate 4-semialdehyde + pyruvate = (2S,4S)-4-hydroxy-2,3,4,5-tetrahydrodipicolinate + H2O + H(+). It participates in amino-acid biosynthesis; L-lysine biosynthesis via DAP pathway; (S)-tetrahydrodipicolinate from L-aspartate: step 3/4. Catalyzes the condensation of (S)-aspartate-beta-semialdehyde [(S)-ASA] and pyruvate to 4-hydroxy-tetrahydrodipicolinate (HTPA). The chain is 4-hydroxy-tetrahydrodipicolinate synthase from Methylococcus capsulatus (strain ATCC 33009 / NCIMB 11132 / Bath).